The chain runs to 177 residues: Interleukin-1 receptor antagonist protein (177 aa).

The first 25 residues, 1–25 (MRPSRSTRRHLISLLLFLFHSETAC), serve as a signal peptide directing secretion. Cysteine 91 and cysteine 141 are joined by a disulfide. Asparagine 109 is a glycosylation site (N-linked (GlcNAc...) asparagine).

It belongs to the IL-1 family.

The protein resides in the secreted. Its function is as follows. Anti-inflammatory antagonist of interleukin-1 family of proinflammatory cytokines such as interleukin-1beta/IL1B and interleukin-1alpha/IL1A. Protects from immune dysregulation and uncontrolled systemic inflammation triggered by IL1 for a range of innate stimulatory agents such as pathogens. The polypeptide is Interleukin-1 receptor antagonist protein (IL1RN) (Oryctolagus cuniculus (Rabbit)).